The following is a 150-amino-acid chain: Large ribosomal subunit protein bL9 (150 aa).

It belongs to the bacterial ribosomal protein bL9 family.

In terms of biological role, binds to the 23S rRNA. This is Large ribosomal subunit protein bL9 from Desulforudis audaxviator (strain MP104C).